Reading from the N-terminus, the 373-residue chain is UDP-N-acetylglucosamine--N-acetylmuramyl-(pentapeptide) pyrophosphoryl-undecaprenol N-acetylglucosamine transferase (373 aa).

UDP-N-acetyl-alpha-D-glucosamine contacts are provided by residues 10-12 (TGG), Asn124, Arg166, Ser196, and Gln301.

Belongs to the glycosyltransferase 28 family. MurG subfamily.

Its subcellular location is the cell membrane. It carries out the reaction di-trans,octa-cis-undecaprenyl diphospho-N-acetyl-alpha-D-muramoyl-L-alanyl-D-glutamyl-meso-2,6-diaminopimeloyl-D-alanyl-D-alanine + UDP-N-acetyl-alpha-D-glucosamine = di-trans,octa-cis-undecaprenyl diphospho-[N-acetyl-alpha-D-glucosaminyl-(1-&gt;4)]-N-acetyl-alpha-D-muramoyl-L-alanyl-D-glutamyl-meso-2,6-diaminopimeloyl-D-alanyl-D-alanine + UDP + H(+). The protein operates within cell wall biogenesis; peptidoglycan biosynthesis. Cell wall formation. Catalyzes the transfer of a GlcNAc subunit on undecaprenyl-pyrophosphoryl-MurNAc-pentapeptide (lipid intermediate I) to form undecaprenyl-pyrophosphoryl-MurNAc-(pentapeptide)GlcNAc (lipid intermediate II). This Desulforudis audaxviator (strain MP104C) protein is UDP-N-acetylglucosamine--N-acetylmuramyl-(pentapeptide) pyrophosphoryl-undecaprenol N-acetylglucosamine transferase.